Consider the following 261-residue polypeptide: Probable septum site-determining protein MinC (261 aa).

The interval 106 to 145 (RAPAAKPADEAEPAAVPAVETAAAPAAAAAPEQPSEPAPT) is disordered. Positions 118–144 (PAAVPAVETAAAPAAAAAPEQPSEPAP) are enriched in low complexity.

It belongs to the MinC family. Interacts with MinD and FtsZ.

Functionally, cell division inhibitor that blocks the formation of polar Z ring septums. Rapidly oscillates between the poles of the cell to destabilize FtsZ filaments that have formed before they mature into polar Z rings. Prevents FtsZ polymerization. In Burkholderia orbicola (strain AU 1054), this protein is Probable septum site-determining protein MinC.